A 422-amino-acid polypeptide reads, in one-letter code: Glutamate-1-semialdehyde 2,1-aminomutase (422 aa).

K264 carries the post-translational modification N6-(pyridoxal phosphate)lysine.

This sequence belongs to the class-III pyridoxal-phosphate-dependent aminotransferase family. HemL subfamily. As to quaternary structure, homodimer. Pyridoxal 5'-phosphate is required as a cofactor.

The protein localises to the cytoplasm. The catalysed reaction is (S)-4-amino-5-oxopentanoate = 5-aminolevulinate. Its pathway is porphyrin-containing compound metabolism; protoporphyrin-IX biosynthesis; 5-aminolevulinate from L-glutamyl-tRNA(Glu): step 2/2. This Clostridium acetobutylicum (strain ATCC 824 / DSM 792 / JCM 1419 / IAM 19013 / LMG 5710 / NBRC 13948 / NRRL B-527 / VKM B-1787 / 2291 / W) protein is Glutamate-1-semialdehyde 2,1-aminomutase.